The chain runs to 301 residues: Hydroxymycolate synthase MmaA4 (301 aa).

S-adenosyl-L-methionine is bound by residues 42-43 (YS), 81-83 (GCG), 103-108 (TLSKNQ), 132-133 (WE), and I145. C278 is an active-site residue.

This sequence belongs to the CFA/CMAS family. In terms of assembly, monomer.

The protein operates within lipid metabolism; mycolic acid biosynthesis. Inhibited by S-adenosyl-N-decyl-aminoethyl (SADAE). In terms of biological role, involved in the biosynthesis of hydroxymycolate, a common precursor of oxygenated mycolic acids (methoxy-mycolate and keto-mycolate). Probably transfers a methyl group from the S-adenosylmethionine (SAM) cofactor and, subsequently or simultaneously, a water molecule onto the double bound of ethylene substrates, leading to the formation of the hydroxylated product at the distal position. Involved in the activation of the antitubercular drug thiacetazone (TAC). This Mycobacterium tuberculosis (strain ATCC 25618 / H37Rv) protein is Hydroxymycolate synthase MmaA4 (mmaA4).